A 647-amino-acid polypeptide reads, in one-letter code: Homologous recombination OB-fold protein (647 aa).

S47 carries the post-translational modification Phosphoserine. Disordered regions lie at residues 284-361, 380-399, and 581-631; these read ARGT…GPQG, SRTPQQPTHPSTRAKTRRFP, and SFLK…DDLD. Asymmetric dimethylarginine occurs at positions 285, 295, 329, and 337. Positions 287 to 308 are enriched in polar residues; that stretch reads TIQSSPQNRFPCQPFQSPSSWL. Low complexity predominate over residues 319 to 332; the sequence is TPNSSCSTPSRTSS. The segment covering 380–390 has biased composition (polar residues); sequence SRTPQQPTHPS. Positions 618–631 are enriched in acidic residues; the sequence is ASPEEELPEADDLD.

In terms of assembly, interacts with MCM8; this interaction is necessary for MCM8-MCM9 helicase complex recruitment to DNA damage sites. Interacts with RPA1; this interaction associates HROB with the RPA complex.

The protein localises to the nucleus. It is found in the chromosome. Its function is as follows. DNA-binding protein involved in homologous recombination that acts by recruiting the MCM8-MCM9 helicase complex to sites of DNA damage to promote DNA repair synthesis. This is Homologous recombination OB-fold protein from Homo sapiens (Human).